Consider the following 433-residue polypeptide: Xylose isomerase (433 aa).

Catalysis depends on residues His-99 and Asp-102. Mg(2+) is bound by residues Glu-230, Glu-266, His-269, Asp-294, Asp-305, Asp-307, and Asp-337.

Belongs to the xylose isomerase family. Homotetramer. The cofactor is Mg(2+).

The protein resides in the cytoplasm. It carries out the reaction alpha-D-xylose = alpha-D-xylulofuranose. This chain is Xylose isomerase, found in Cereibacter sphaeroides (strain ATCC 17025 / ATH 2.4.3) (Rhodobacter sphaeroides).